We begin with the raw amino-acid sequence, 274 residues long: MQQLQNVIESAFERRADITPANVDTVTREAVNQVISLLDSGALRVAEKIDGQWVTHQWLKKAVLLSFRINDNQVIDGAESRYFDKVPMKFADYDEARFVKEGFRVVPPAAVRQGAFIARNTVLMPSYVNIGAYVDEGSMVDTWATVGSCAQIGKNVHLSGGVGIGGVLEPLQANPTIIEDNCFIGARSEVVEGVIVEEGSVISMGVYIGQSTRIYDRETGEVHYGRVPAGSVVVSGNLPSKDGKYSLYCAVIVKKVDAKTRSKVGINELLRTID.

R104 and D141 together coordinate substrate.

The protein belongs to the transferase hexapeptide repeat family. Homotrimer.

It is found in the cytoplasm. The catalysed reaction is (S)-2,3,4,5-tetrahydrodipicolinate + succinyl-CoA + H2O = (S)-2-succinylamino-6-oxoheptanedioate + CoA. It functions in the pathway amino-acid biosynthesis; L-lysine biosynthesis via DAP pathway; LL-2,6-diaminopimelate from (S)-tetrahydrodipicolinate (succinylase route): step 1/3. The polypeptide is 2,3,4,5-tetrahydropyridine-2,6-dicarboxylate N-succinyltransferase (Enterobacter sp. (strain 638)).